Consider the following 775-residue polypeptide: Rab3 GTPase-activating protein catalytic subunit (775 aa).

Residues S173, S330, S373, S375, and S384 each carry the phosphoserine modification. The interval 324–351 (DEGKKTSPSDSMTKAYPADAGKAGGQLG) is disordered. Residues 386–414 (AEDLRGNGQESTKKGGPKDMAPLKPEGRL) are disordered. At S458 the chain carries Phosphoserine.

This sequence belongs to the Rab3-GAP catalytic subunit family. As to quaternary structure, the Rab3 GTPase-activating complex is a heterodimer composed of Rab3gap1 and Rab3gap2. The Rab3 GTPase-activating complex interacts with DMXL2. Interacts with LMAN1.

Its subcellular location is the cytoplasm. It localises to the endoplasmic reticulum. The protein localises to the golgi apparatus. The protein resides in the cis-Golgi network. Its function is as follows. Catalytic subunit of the Rab3 GTPase-activating (Rab3GAP) complex composed of RAB3GAP1 and RAB3GAP2, which has GTPase-activating protein (GAP) activity towards various Rab3 subfamily members (RAB3A, RAB3B, RAB3C and RAB3D), RAB5A and RAB43, and guanine nucleotide exchange factor (GEF) activity towards RAB18. As part of the Rab3GAP complex, acts as a GAP for Rab3 proteins by converting active RAB3-GTP to the inactive form RAB3-GDP. Rab3 proteins are involved in regulated exocytosis of neurotransmitters and hormones. The Rab3GAP complex, acts as a GEF for RAB18 by promoting the conversion of inactive RAB18-GDP to the active form RAB18-GTP. Recruits and stabilizes RAB18 at the cis-Golgi membrane where RAB18 is most likely activated. Also involved in RAB18 recruitment at the endoplasmic reticulum (ER) membrane where it maintains proper ER structure. Required for normal eye and brain development. May participate in neurodevelopmental processes such as proliferation, migration and differentiation before synapse formation, and non-synaptic vesicular release of neurotransmitters. This chain is Rab3 GTPase-activating protein catalytic subunit, found in Rattus norvegicus (Rat).